The sequence spans 323 residues: GMP reductase (323 aa).

Residue Cys174 is the Thioimidate intermediate of the active site. Residue 203–226 (IIADGGIRHNGDIAKSVRFGASMV) participates in NADP(+) binding.

Belongs to the IMPDH/GMPR family. GuaC type 2 subfamily.

The enzyme catalyses IMP + NH4(+) + NADP(+) = GMP + NADPH + 2 H(+). Functionally, catalyzes the irreversible NADPH-dependent deamination of GMP to IMP. It functions in the conversion of nucleobase, nucleoside and nucleotide derivatives of G to A nucleotides, and in maintaining the intracellular balance of A and G nucleotides. The protein is GMP reductase of Oenococcus oeni (strain ATCC BAA-331 / PSU-1).